The chain runs to 359 residues: Homoserine O-acetyltransferase (359 aa).

Positions 49 to 332 (VLICHALTGS…QSSYGHDAFL (284 aa)) constitute an AB hydrolase-1 domain. Serine 143 serves as the catalytic Nucleophile. Arginine 212 serves as a coordination point for substrate. Active-site residues include aspartate 299 and histidine 328. Position 329 (aspartate 329) interacts with substrate.

The protein belongs to the AB hydrolase superfamily. MetX family. Homodimer.

Its subcellular location is the cytoplasm. It catalyses the reaction L-homoserine + acetyl-CoA = O-acetyl-L-homoserine + CoA. It functions in the pathway amino-acid biosynthesis; L-methionine biosynthesis via de novo pathway; O-acetyl-L-homoserine from L-homoserine: step 1/1. Transfers an acetyl group from acetyl-CoA to L-homoserine, forming acetyl-L-homoserine. The polypeptide is Homoserine O-acetyltransferase (Trichormus variabilis (strain ATCC 29413 / PCC 7937) (Anabaena variabilis)).